Reading from the N-terminus, the 164-residue chain is Transcription antitermination protein NusB (164 aa).

This sequence belongs to the NusB family.

In terms of biological role, involved in transcription antitermination. Required for transcription of ribosomal RNA (rRNA) genes. Binds specifically to the boxA antiterminator sequence of the ribosomal RNA (rrn) operons. The chain is Transcription antitermination protein NusB from Chlorobium limicola (strain DSM 245 / NBRC 103803 / 6330).